A 323-amino-acid polypeptide reads, in one-letter code: Chitinase 1 (323 aa).

An N-terminal signal peptide occupies residues 1-20 (MRALAVVVVATAFAVVAVRG). The region spanning 21–61 (EQCGSQAGGALCPNCLCCSQYGWCGSTSAYCGSGCQSQCSG) is the Chitin-binding type-1 domain. Cystine bridges form between Cys-23–Cys-38, Cys-32–Cys-44, Cys-35–Cys-63, Cys-37–Cys-51, Cys-55–Cys-59, Cys-100–Cys-162, Cys-176–Cys-184, and Cys-283–Cys-315. The Proton donor role is filled by Glu-144.

This sequence belongs to the glycosyl hydrolase 19 family. Chitinase class I subfamily. In terms of tissue distribution, expressed in roots, leaves, sheaths and meristems.

It carries out the reaction Random endo-hydrolysis of N-acetyl-beta-D-glucosaminide (1-&gt;4)-beta-linkages in chitin and chitodextrins.. Hydrolyzes chitin and may play a role in defense against fungal pathogens containing chitin. The chain is Chitinase 1 (Cht1) from Oryza sativa subsp. japonica (Rice).